The sequence spans 389 residues: 3-oxo-Delta(4,5)-steroid 5-beta-reductase (389 aa).

Residues Thr35–Ile37, Arg63–Arg64, Asp81–Ile82, Thr105, and Gln143 contribute to the NADP(+) site. Catalysis depends on residues Lys147 and Tyr179. NADP(+) is bound by residues Tyr179, Ile206, and Ser213–Met215.

This sequence belongs to the short-chain dehydrogenases/reductases (SDR) family. Highly divergent. As to quaternary structure, homodimer.

It catalyses the reaction 5beta-cholestan-3-one + NADP(+) = cholest-4-en-3-one + NADPH + H(+). The catalysed reaction is 4,5beta-dihydrocortisone + NADP(+) = cortisone + NADPH + H(+). Functionally, involved in cardenolide biosynthesis. Catalyzes the stereospecific conversion of progesterone to 5-beta-pregnane-3,20-dione. Can use progesterone, testosterone, 4-androstene-3,17-dione, cortisol and cortisone as substrates, but not pregnenolone, 21-OH-pregnenolone or isoprogesterone. NADPH could not be replaced by NADH. This Digitalis lanata (Grecian foxglove) protein is 3-oxo-Delta(4,5)-steroid 5-beta-reductase.